The following is a 546-amino-acid chain: CTP synthase (546 aa).

Residues 1–269 (MADTKYIFVT…DKVTLKKLAL (269 aa)) form an amidoligase domain region. Residue Ser15 coordinates CTP. A UTP-binding site is contributed by Ser15. Position 16–21 (16–21 (SLGKGI)) interacts with ATP. Tyr56 is a binding site for L-glutamine. An ATP-binding site is contributed by Asp73. Mg(2+) contacts are provided by Asp73 and Glu143. CTP is bound by residues 150–152 (DIE), 190–195 (KTKPTQ), and Lys226. Residues 190–195 (KTKPTQ) and Lys226 contribute to the UTP site. The region spanning 295-537 (HIGLIGKYVE…VKAAHEHSVK (243 aa)) is the Glutamine amidotransferase type-1 domain. Gly357 contributes to the L-glutamine binding site. Catalysis depends on Cys384, which acts as the Nucleophile; for glutamine hydrolysis. Residues 385–388 (LGMQ), Glu408, and Arg465 each bind L-glutamine. Active-site residues include His510 and Glu512.

It belongs to the CTP synthase family. In terms of assembly, homotetramer.

The catalysed reaction is UTP + L-glutamine + ATP + H2O = CTP + L-glutamate + ADP + phosphate + 2 H(+). The enzyme catalyses L-glutamine + H2O = L-glutamate + NH4(+). It catalyses the reaction UTP + NH4(+) + ATP = CTP + ADP + phosphate + 2 H(+). It functions in the pathway pyrimidine metabolism; CTP biosynthesis via de novo pathway; CTP from UDP: step 2/2. Allosterically activated by GTP, when glutamine is the substrate; GTP has no effect on the reaction when ammonia is the substrate. The allosteric effector GTP functions by stabilizing the protein conformation that binds the tetrahedral intermediate(s) formed during glutamine hydrolysis. Inhibited by the product CTP, via allosteric rather than competitive inhibition. Catalyzes the ATP-dependent amination of UTP to CTP with either L-glutamine or ammonia as the source of nitrogen. Regulates intracellular CTP levels through interactions with the four ribonucleotide triphosphates. The protein is CTP synthase of Christiangramia forsetii (strain DSM 17595 / CGMCC 1.15422 / KT0803) (Gramella forsetii).